The primary structure comprises 77 residues: Small VCP/p97-interacting protein (77 aa).

Disordered regions lie at residues Met1 to Glu20 and Leu25 to Ser77. Gly2 carries N-myristoyl glycine lipidation. 2 S-palmitoyl cysteine lipidation sites follow: Cys4 and Cys7. The VCP/p97-interacting motif (VIM) stretch occupies residues Lys21–Gln33. Basic and acidic residues predominate over residues Leu25–Ala37. Ser46 carries the post-translational modification Phosphoserine.

This sequence belongs to the SVIP family. In terms of assembly, interacts (via VIM motif) with VCP/p97. Forms a complex with VCP/p97 and DERL1.

It is found in the membrane. It localises to the smooth endoplasmic reticulum membrane. Its subcellular location is the golgi apparatus membrane. The protein resides in the cell membrane. The protein localises to the lysosome membrane. Its function is as follows. Negative regulator of the ER-associated degradation pathway (ERAD) of misfolded proteins. It competes with AMFR/gp78 for binding VCP/p97, and inhibits AMFR/gp78-VCP/p97 complex formation that is required for degradation of ERAD substrates. Involved in the regulation of adrenal cortisol and dehydroepiandrosterone (DHEA) biosynthesis. This is Small VCP/p97-interacting protein (SVIP) from Homo sapiens (Human).